Reading from the N-terminus, the 420-residue chain is 3-phosphoshikimate 1-carboxyvinyltransferase (420 aa).

3-phosphoshikimate-binding residues include lysine 26, serine 27, and arginine 31. Lysine 26 contributes to the phosphoenolpyruvate binding site. Glycine 97 and arginine 125 together coordinate phosphoenolpyruvate. 3-phosphoshikimate-binding residues include serine 170, serine 171, glutamine 172, aspartate 297, asparagine 320, and lysine 324. A phosphoenolpyruvate-binding site is contributed by glutamine 172. Aspartate 297 acts as the Proton acceptor in catalysis. Phosphoenolpyruvate-binding residues include arginine 328, arginine 375, and lysine 400.

The protein belongs to the EPSP synthase family. As to quaternary structure, monomer.

The protein resides in the cytoplasm. The catalysed reaction is 3-phosphoshikimate + phosphoenolpyruvate = 5-O-(1-carboxyvinyl)-3-phosphoshikimate + phosphate. It participates in metabolic intermediate biosynthesis; chorismate biosynthesis; chorismate from D-erythrose 4-phosphate and phosphoenolpyruvate: step 6/7. Functionally, catalyzes the transfer of the enolpyruvyl moiety of phosphoenolpyruvate (PEP) to the 5-hydroxyl of shikimate-3-phosphate (S3P) to produce enolpyruvyl shikimate-3-phosphate and inorganic phosphate. This is 3-phosphoshikimate 1-carboxyvinyltransferase from Rhizobium etli (strain ATCC 51251 / DSM 11541 / JCM 21823 / NBRC 15573 / CFN 42).